The following is a 500-amino-acid chain: Probable zinc metalloprotease MGYG_02393 (500 aa).

The signal sequence occupies residues 1–24; that stretch reads MHLSMGGLLPGLALLASANALALA. Asparagine 61, asparagine 103, and asparagine 124 each carry an N-linked (GlcNAc...) asparagine glycan. The Zn(2+) site is built by histidine 174, aspartate 194, and glutamate 230. N-linked (GlcNAc...) asparagine glycosylation is present at asparagine 245. Residue aspartate 257 participates in Zn(2+) binding. The Fibronectin type-III domain maps to 414–500; it reads MPRNVRVNTS…ERGVAVLPFP (87 aa). Asparagine 421 and asparagine 427 each carry an N-linked (GlcNAc...) asparagine glycan.

The protein belongs to the peptidase M28 family. M28B subfamily. Zn(2+) serves as cofactor.

It is found in the secreted. The chain is Probable zinc metalloprotease MGYG_02393 from Arthroderma gypseum (strain ATCC MYA-4604 / CBS 118893) (Microsporum gypseum).